A 113-amino-acid polypeptide reads, in one-letter code: U11-theraphotoxin-Hhn1f (113 aa).

An N-terminal signal peptide occupies residues 1-21 (MNTVRVTFLLVFVLAVSLGQA). The propeptide occupies 22-74 (DKDENRMEMQEKTEQGKSYLDFAENLLLQKLEELEAKLLEEDSEESRNSRQKR). The segment at 61–83 (EEDSEESRNSRQKRCIGEGVPCD) is disordered. 3 disulfides stabilise this stretch: Cys-75/Cys-90, Cys-82/Cys-95, and Cys-89/Cys-110.

The protein belongs to the neurotoxin 14 (magi-1) family. 01 (HNTX-16) subfamily. In terms of tissue distribution, expressed by the venom gland.

The protein localises to the secreted. Functionally, probable ion channel inhibitor. The polypeptide is U11-theraphotoxin-Hhn1f (Cyriopagopus hainanus (Chinese bird spider)).